Here is a 255-residue protein sequence, read N- to C-terminus: Ribonuclease HII (255 aa).

The RNase H type-2 domain maps to 72–255 (RLIAGVDEAG…KTFAPVQSYC (184 aa)). Positions 78, 79, and 170 each coordinate a divalent metal cation.

This sequence belongs to the RNase HII family. Mn(2+) serves as cofactor. It depends on Mg(2+) as a cofactor.

It localises to the cytoplasm. The catalysed reaction is Endonucleolytic cleavage to 5'-phosphomonoester.. Its function is as follows. Endonuclease that specifically degrades the RNA of RNA-DNA hybrids. This chain is Ribonuclease HII, found in Bacillus velezensis (strain DSM 23117 / BGSC 10A6 / LMG 26770 / FZB42) (Bacillus amyloliquefaciens subsp. plantarum).